We begin with the raw amino-acid sequence, 127 residues long: Glycine cleavage system H protein (127 aa).

Positions 22–104 (EVVIGITHFA…YEGAWMVKVE (83 aa)) constitute a Lipoyl-binding domain. K63 bears the N6-lipoyllysine mark.

It belongs to the GcvH family. In terms of assembly, the glycine cleavage system is composed of four proteins: P, T, L and H. (R)-lipoate serves as cofactor.

In terms of biological role, the glycine cleavage system catalyzes the degradation of glycine. The H protein shuttles the methylamine group of glycine from the P protein to the T protein. Its function is as follows. Is also involved in protein lipoylation via its role as an octanoyl/lipoyl carrier protein intermediate. This chain is Glycine cleavage system H protein, found in Bacillus cereus (strain ATCC 10987 / NRS 248).